Consider the following 82-residue polypeptide: RNA-binding protein Hfq (82 aa).

The 61-residue stretch at 9–69 (DHFLNQLRKE…ISTFSPARNV (61 aa)) folds into the Sm domain.

It belongs to the Hfq family. In terms of assembly, homohexamer.

In terms of biological role, RNA chaperone that binds small regulatory RNA (sRNAs) and mRNAs to facilitate mRNA translational regulation in response to envelope stress, environmental stress and changes in metabolite concentrations. Also binds with high specificity to tRNAs. The polypeptide is RNA-binding protein Hfq (Exiguobacterium sp. (strain ATCC BAA-1283 / AT1b)).